The chain runs to 258 residues: Redox-sensing transcriptional repressor Rex (258 aa).

Residues 26 to 65 (LYLRALTALSERSVPTVSSEELAAAAGVNSAKLRKDFSYL) constitute a DNA-binding region (H-T-H motif). NAD(+) is bound at residue 100-105 (GIGNLG). Positions 219-258 (AGEEAAADGAAPPVAARKQQRSTGSADQGPDGDVPAVMPA) are disordered. Residues 225 to 234 (ADGAAPPVAA) show a composition bias toward low complexity.

The protein belongs to the transcriptional regulatory Rex family. Homodimer.

It localises to the cytoplasm. In terms of biological role, modulates transcription of respiratory genes in response to changes in cellular NADH/NAD(+) redox state. Binds to the DNA sequence motif 5'-TGTGAACGCGTTCACA-3' in the promoter of the cydABCD operon. May play a general role as a sensor of cellular redox balance. This Streptomyces coelicolor (strain ATCC BAA-471 / A3(2) / M145) protein is Redox-sensing transcriptional repressor Rex.